Reading from the N-terminus, the 365-residue chain is NADH-quinone oxidoreductase subunit H 2 (365 aa).

8 helical membrane passes run 1–21, 71–91, 100–120, 136–156, 199–219, 254–274, 301–321, and 342–362; these read MFVV…VVWA, LAPV…PFAP, VGVF…FLAG, IAQV…VVLI, FVSW…VFFI, ILFL…VVLF, IAGY…VVFL, and WKIL…WVVW.

The protein belongs to the complex I subunit 1 family. In terms of assembly, NDH-1 is composed of 14 different subunits. Subunits NuoA, H, J, K, L, M, N constitute the membrane sector of the complex.

Its subcellular location is the cell inner membrane. The catalysed reaction is a quinone + NADH + 5 H(+)(in) = a quinol + NAD(+) + 4 H(+)(out). In terms of biological role, NDH-1 shuttles electrons from NADH, via FMN and iron-sulfur (Fe-S) centers, to quinones in the respiratory chain. The immediate electron acceptor for the enzyme in this species is believed to be ubiquinone. Couples the redox reaction to proton translocation (for every two electrons transferred, four hydrogen ions are translocated across the cytoplasmic membrane), and thus conserves the redox energy in a proton gradient. This subunit may bind ubiquinone. This Cytophaga hutchinsonii (strain ATCC 33406 / DSM 1761 / CIP 103989 / NBRC 15051 / NCIMB 9469 / D465) protein is NADH-quinone oxidoreductase subunit H 2.